Consider the following 314-residue polypeptide: Solute carrier family 25 member 33 (314 aa).

Solcar repeat units follow at residues 4-111 (KDTL…SKET), 119-206 (NSGV…LKKY), and 224-308 (SDFL…IVHL). A run of 6 helical transmembrane segments spans residues 7–27 (LLHLFAGGCGGTVGAIMTCPL), 44–58 (VFQVQLGTLNGAGVI), 114–134 (GIFVPNSGVVHMSSAGFAAFI), 183–203 (LTASYAGISETMICFLIYETL), 226–246 (FLGLMFAAAFAKGCASCIAYP), and 291–311 (QIPNTAIVLSTYELIVHLLAE).

It belongs to the mitochondrial carrier (TC 2.A.29) family.

It localises to the mitochondrion inner membrane. Functionally, mitochondrial transporter that imports/exports pyrimidine nucleotides into and from mitochondria which participates in dendritic cell endocytosis. This is Solute carrier family 25 member 33 (slc25a33) from Danio rerio (Zebrafish).